A 350-amino-acid chain; its full sequence is Protein TRIGALACTOSYLDIACYLGLYCEROL 1, chloroplastic (350 aa).

The tract at residues 67 to 86 is disordered; the sequence is SMSMLEEETSTENNAPSQEA. The helical transmembrane segment at 98-117 threads the bilayer; it reads YIWRGLSVPIIAGQVVLRIL. Residues 118-136 lie on the Stromal side of the membrane; the sequence is KGKIHWRNTLQQLERTGPK. A helical membrane pass occupies residues 137–157; that stretch reads SLGVCLLTSTFVGMAFTIQFV. Over 158–168 the chain is Chloroplast intermembrane; sequence REFTRLGLNRS. A helical transmembrane segment spans residues 169-189; it reads IGGVLALAFSRELSPVITSIV. The Stromal segment spans residues 190-229; sequence VAGRMGSAFAAELGTMQVSEQTDTLRVLGADPIDYLITPR. A helical membrane pass occupies residues 230–250; it reads VIASCLALPFLTLMCFTVGMA. The Chloroplast intermembrane segment spans residues 251–288; sequence SSALLSDAVYGISINIIMDSAHRALRPWDIVSAMIKSQ. A helical membrane pass occupies residues 289 to 309; that stretch reads VFGAIISVISCSWGVTTTGGA. Residues 310–318 lie on the Stromal side of the membrane; sequence KGVGESTTS. A helical transmembrane segment spans residues 319–339; sequence AVVMSLVGIFIADFVLSSFFF. Residues 340-350 are Chloroplast intermembrane-facing; it reads QGAGDSLKNCV.

This sequence belongs to the MlaE permease family. Permease subunit of the TGD complex, a lipid translocator at the inner chloroplast envelope membrane made of TGD1, TGD2 and TGD3. Interacts with TGD2 and TGD3 with an overall subunit stoichiometry of 2 TGD1, 2 TGD3 and 8 to 12 TGD2. Interacts with TGD5. In terms of tissue distribution, high levels in green tissues, but low levels in nongreen tissues such as roots.

The protein localises to the plastid. It localises to the chloroplast inner membrane. Required during embryogenesis. Permease involved in lipid transfer from the endoplasmic reticulum (ER) to plastids, and necessary for thylakoids formation. In Arabidopsis thaliana (Mouse-ear cress), this protein is Protein TRIGALACTOSYLDIACYLGLYCEROL 1, chloroplastic.